The chain runs to 242 residues: 7-cyano-7-deazaguanine synthase (242 aa).

Residue 13-23 (FSGGQDSSVCL) coordinates ATP. Positions 201, 216, 219, and 222 each coordinate Zn(2+).

Belongs to the QueC family. Zn(2+) serves as cofactor.

The enzyme catalyses 7-carboxy-7-deazaguanine + NH4(+) + ATP = 7-cyano-7-deazaguanine + ADP + phosphate + H2O + H(+). Its pathway is purine metabolism; 7-cyano-7-deazaguanine biosynthesis. Functionally, catalyzes the ATP-dependent conversion of 7-carboxy-7-deazaguanine (CDG) to 7-cyano-7-deazaguanine (preQ(0)). This is 7-cyano-7-deazaguanine synthase from Caulobacter vibrioides (strain ATCC 19089 / CIP 103742 / CB 15) (Caulobacter crescentus).